The primary structure comprises 394 residues: Salivary plasminogen activator gamma (394 aa).

Positions 1 to 36 are cleaved as a signal peptide; it reads MVNTMKTKLLCVLLLCGAVFSLPRQETYRQLARGSR. In terms of domain architecture, Kringle spans 45–126; the sequence is CYKDQGVTYR…TSESCSVPVC (82 aa). 9 disulfides stabilise this stretch: C45/C126, C66/C108, C97/C121, C131/C262, C174/C190, C182/C251, C276/C351, C308/C324, and C341/C369. Residues 143–393 form the Peptidase S1 domain; the sequence is STGGLFTDIT…YLGWIRDNMR (251 aa). Residues H189 and D238 each act as charge relay system in the active site. N315 carries an N-linked (GlcNAc...) asparagine glycan. S345 (charge relay system) is an active-site residue.

This sequence belongs to the peptidase S1 family. As to quaternary structure, monomer.

It localises to the secreted. The catalysed reaction is Specific cleavage of Arg-|-Val bond in plasminogen to form plasmin.. Functionally, probably essential to support the feeding habits of this exclusively haematophagous animal. Probable potent thrombolytic agent. This Desmodus rotundus (Vampire bat) protein is Salivary plasminogen activator gamma.